We begin with the raw amino-acid sequence, 363 residues long: Homeobox protein Hox-A2a (363 aa).

Disordered regions lie at residues 30-88 (DSFQ…LPPE), 98-117 (SKRNHLPNSTTTTISNGPVC), 189-220 (RMKHKRQTQSKENHNAEGKGPSTEEGIHSDEE), and 268-308 (DKNL…LDVS). Over residues 31–44 (SFQSSSIKSSTLSR) the composition is skewed to polar residues. The short motif at 88-93 (EYPWMR) is the Antp-type hexapeptide element. Polar residues predominate over residues 103 to 113 (LPNSTTTTISN). The segment at residues 137 to 196 (SRRLRTAYTNTQLLELEKEFHFNKYLCRPRRVEIAALLDLTERQVKVWFQNRRMKHKRQT) is a DNA-binding region (homeobox).

It belongs to the Antp homeobox family. Proboscipedia subfamily.

The protein resides in the nucleus. In terms of biological role, sequence-specific transcription factor which is part of a developmental regulatory system that provides cells with specific positional identities on the anterior-posterior axis. This Takifugu rubripes (Japanese pufferfish) protein is Homeobox protein Hox-A2a (hoxa2a).